The chain runs to 905 residues: MVSLGVFARKFFGSAYERRLKVLRQKVAQINALEEQFVKLSDEQLCQKTDAFRKRLSEGENVDSLLPEAFATVREAAKRVYDMRPFDVQLIGGMVLHDCGIAEMRTGEGKTLMATLPIYLNALEGKGVHVVTVNDYLASRDAETMGKIFSFLGMTTGVILHDLDSDARRAAYACDITYATNNELGFDYLRDNMAFDRSQMVQRGHHYAIVDEVDSILIDEARTPLIISGPLEDRTDFYNLIDTFIPALIPEDYEIDEKQKTTTFTEVGTEKIEKMLEQAGYLKGESLYDIENVAIVHHVNNALKAHKLFVRDKDYIVRNDEIVIIDEFTGRMMPGRRYSEGLHQALEAKEHVAIQPENQTLASITFQNYFRMYRKLSGMTGTAATEAEEFRNIYGLDVVEVPTNLPVQRLDEDDEIYRTAEEKYRAIVRDIRQAHEKKQPILVGTTSIEKSEQLAERLRKEGITDFKVLNARYHEQEAYIIAQAGVPGALTIATNMAGRGTDIQLGGNVEMRIRQELQDIPEGPERTAKIEEIKKDVKQLKEKALAAGGLYVIATERHESRRIDNQLRGRSGRQGDPGRSKFFLSLQDDLMRIFGSNRMDGMLQKLGLKENEAIIHPWINKALEKAQKKVEARNFEIRKNLLKYDDVMNDQRKVIFEQRMEVMNADDLSEMIHEMRNDVVEDLVETYIPSGTYSEKWDVKALEEELQQLFNLELPVKEWAKEDGIAEEQILERILDAVTKLEDERTERYSPEVMAYFQKAVLLETIDTLWRENLVSLDHLRSVVGFRGYAQRDPLNEYKTESFELFQSMLKNLRRIVTSKLMRFEIIQQPTEPSMPEQTGADSSVFNDQNQENAPPLWARSQENRFVNPQDRDPNDVTTWGKVGRNERCPCGSEKKYKHCHGAFV.

Residues Q89, G107–T111, and D502 contribute to the ATP site. The Zn(2+) site is built by C889, C891, C900, and H901.

Belongs to the SecA family. In terms of assembly, monomer and homodimer. Part of the essential Sec protein translocation apparatus which comprises SecA, SecYEG and auxiliary proteins SecDF-YajC and YidC. The cofactor is Zn(2+).

Its subcellular location is the cell inner membrane. It is found in the cytoplasm. The enzyme catalyses ATP + H2O + cellular proteinSide 1 = ADP + phosphate + cellular proteinSide 2.. Functionally, part of the Sec protein translocase complex. Interacts with the SecYEG preprotein conducting channel. Has a central role in coupling the hydrolysis of ATP to the transfer of proteins into and across the cell membrane, serving both as a receptor for the preprotein-SecB complex and as an ATP-driven molecular motor driving the stepwise translocation of polypeptide chains across the membrane. The protein is Protein translocase subunit SecA of Bartonella tribocorum (strain CIP 105476 / IBS 506).